The chain runs to 315 residues: Probable inactive acetaldehyde dehydrogenase 1 (315 aa).

NAD(+)-binding positions include 14–17 (SGDV) and N288.

The protein belongs to the acetaldehyde dehydrogenase family.

This Mycolicibacterium vanbaalenii (strain DSM 7251 / JCM 13017 / BCRC 16820 / KCTC 9966 / NRRL B-24157 / PYR-1) (Mycobacterium vanbaalenii) protein is Probable inactive acetaldehyde dehydrogenase 1.